The chain runs to 215 residues: 3-isopropylmalate dehydratase small subunit (215 aa).

This sequence belongs to the LeuD family. LeuD type 1 subfamily. As to quaternary structure, heterodimer of LeuC and LeuD.

It catalyses the reaction (2R,3S)-3-isopropylmalate = (2S)-2-isopropylmalate. Its pathway is amino-acid biosynthesis; L-leucine biosynthesis; L-leucine from 3-methyl-2-oxobutanoate: step 2/4. Its function is as follows. Catalyzes the isomerization between 2-isopropylmalate and 3-isopropylmalate, via the formation of 2-isopropylmaleate. The polypeptide is 3-isopropylmalate dehydratase small subunit (Chromohalobacter salexigens (strain ATCC BAA-138 / DSM 3043 / CIP 106854 / NCIMB 13768 / 1H11)).